The sequence spans 156 residues: Lipoprotein signal peptidase (156 aa).

2 consecutive transmembrane segments (helical) span residues 57 to 77 (LFLI…LFIN) and 83 to 103 (ILKI…IDRI). Residues Asp-110 and Asp-129 contribute to the active site. The helical transmembrane segment at 124–144 (IFNIADVLVSLGTILLIIFII) threads the bilayer.

This sequence belongs to the peptidase A8 family.

The protein localises to the cell membrane. The catalysed reaction is Release of signal peptides from bacterial membrane prolipoproteins. Hydrolyzes -Xaa-Yaa-Zaa-|-(S,diacylglyceryl)Cys-, in which Xaa is hydrophobic (preferably Leu), and Yaa (Ala or Ser) and Zaa (Gly or Ala) have small, neutral side chains.. It functions in the pathway protein modification; lipoprotein biosynthesis (signal peptide cleavage). This protein specifically catalyzes the removal of signal peptides from prolipoproteins. In Clostridium tetani (strain Massachusetts / E88), this protein is Lipoprotein signal peptidase.